The following is a 336-amino-acid chain: DNA-directed RNA polymerase subunit alpha (336 aa).

The alpha N-terminal domain (alpha-NTD) stretch occupies residues 1–235 (MIEFVIPKKL…HFKIVTEGLP (235 aa)). The alpha C-terminal domain (alpha-CTD) stretch occupies residues 264–336 (RENSDVYNRK…KFGLELRKGE (73 aa)).

The protein belongs to the RNA polymerase alpha chain family. As to quaternary structure, homodimer. The RNAP catalytic core consists of 2 alpha, 1 beta, 1 beta' and 1 omega subunit. When a sigma factor is associated with the core the holoenzyme is formed, which can initiate transcription.

The catalysed reaction is RNA(n) + a ribonucleoside 5'-triphosphate = RNA(n+1) + diphosphate. Its function is as follows. DNA-dependent RNA polymerase catalyzes the transcription of DNA into RNA using the four ribonucleoside triphosphates as substrates. The protein is DNA-directed RNA polymerase subunit alpha of Thermotoga maritima (strain ATCC 43589 / DSM 3109 / JCM 10099 / NBRC 100826 / MSB8).